The following is a 395-amino-acid chain: 8-amino-7-oxononanoate synthase (395 aa).

A substrate-binding site is contributed by Lys-24. Position 111 to 112 (111 to 112 (GF)) interacts with pyridoxal 5'-phosphate. His-136 lines the substrate pocket. Pyridoxal 5'-phosphate contacts are provided by residues Ser-184, 209–212 (DDAH), and 240–243 (TLSK). Lys-243 is modified (N6-(pyridoxal phosphate)lysine). Thr-357 contacts substrate.

This sequence belongs to the class-II pyridoxal-phosphate-dependent aminotransferase family. BioF subfamily. As to quaternary structure, homodimer. The cofactor is pyridoxal 5'-phosphate.

It catalyses the reaction 6-carboxyhexanoyl-[ACP] + L-alanine + H(+) = (8S)-8-amino-7-oxononanoate + holo-[ACP] + CO2. It participates in cofactor biosynthesis; biotin biosynthesis. Catalyzes the decarboxylative condensation of pimeloyl-[acyl-carrier protein] and L-alanine to produce 8-amino-7-oxononanoate (AON), [acyl-carrier protein], and carbon dioxide. This is 8-amino-7-oxononanoate synthase from Treponema denticola (strain ATCC 35405 / DSM 14222 / CIP 103919 / JCM 8153 / KCTC 15104).